The sequence spans 224 residues: MKLVIKVTGKFFDDQGDKTPLSSAIRSLVQEGHRVALVTGGGTTARKYISLGRSLNLNEASLDLLGIWVARLNAFLMALSMPDLAYSRIPESLEQFLEYWGHGKVVVVGGFQPGQSTAAVSALVAEAISADYLVMVTTVEGVFDSDPKKNPNAKFLPRVTTTELKSILENTQSVKAGTYELLDPMAMKIVERSRIKVIVTSVDKIGKLTRIIKGEETASIVEPV.

6–10 (KVTGK) contacts ATP. Residue glycine 41 participates in UMP binding. Glycine 42 and arginine 46 together coordinate ATP. Residues aspartate 63 and 111-117 (FQPGQST) each bind UMP. Residues threonine 137, phenylalanine 143, and aspartate 146 each coordinate ATP.

Belongs to the UMP kinase family. In terms of assembly, homohexamer.

It localises to the cytoplasm. The catalysed reaction is UMP + ATP = UDP + ADP. The protein operates within pyrimidine metabolism; CTP biosynthesis via de novo pathway; UDP from UMP (UMPK route): step 1/1. Its activity is regulated as follows. Inhibited by UTP. Catalyzes the reversible phosphorylation of UMP to UDP. This Metallosphaera sedula (strain ATCC 51363 / DSM 5348 / JCM 9185 / NBRC 15509 / TH2) protein is Uridylate kinase.